A 251-amino-acid chain; its full sequence is ATP synthase subunit a (251 aa).

The next 5 membrane-spanning stretches (helical) occupy residues 34–54 (VFLTSWFVIGVLVLASVAASS), 93–113 (FVGTLFLFIFVSNWSGALVPF), 130–150 (INTTVALALLTSLAYFYAGFS), 195–215 (LVVGVLVLLVPLFVPLPVMAL), and 216–236 (GLFTSAIQALIFATLAAAYIG).

This sequence belongs to the ATPase A chain family. F-type ATPases have 2 components, CF(1) - the catalytic core - and CF(0) - the membrane proton channel. CF(1) has five subunits: alpha(3), beta(3), gamma(1), delta(1), epsilon(1). CF(0) has four main subunits: a, b, b' and c.

It is found in the cellular thylakoid membrane. Its function is as follows. Key component of the proton channel; it plays a direct role in the translocation of protons across the membrane. This Nostoc sp. (strain PCC 7120 / SAG 25.82 / UTEX 2576) protein is ATP synthase subunit a.